The following is a 638-amino-acid chain: 1-deoxy-D-xylulose-5-phosphate synthase (638 aa).

Residues H79 and 120-122 contribute to the thiamine diphosphate site; that span reads AHS. D151 lines the Mg(2+) pocket. Thiamine diphosphate is bound by residues 152–153, N180, Y289, and E371; that span reads GA. N180 is a binding site for Mg(2+).

It belongs to the transketolase family. DXPS subfamily. Homodimer. Mg(2+) is required as a cofactor. It depends on thiamine diphosphate as a cofactor.

It catalyses the reaction D-glyceraldehyde 3-phosphate + pyruvate + H(+) = 1-deoxy-D-xylulose 5-phosphate + CO2. Its pathway is metabolic intermediate biosynthesis; 1-deoxy-D-xylulose 5-phosphate biosynthesis; 1-deoxy-D-xylulose 5-phosphate from D-glyceraldehyde 3-phosphate and pyruvate: step 1/1. Functionally, catalyzes the acyloin condensation reaction between C atoms 2 and 3 of pyruvate and glyceraldehyde 3-phosphate to yield 1-deoxy-D-xylulose-5-phosphate (DXP). This is 1-deoxy-D-xylulose-5-phosphate synthase from Rhizobium etli (strain CIAT 652).